The primary structure comprises 684 residues: DNA ligase (684 aa).

NAD(+)-binding positions include 46 to 50 (DYVYD), 100 to 101 (SL), and Glu130. Lys132 serves as the catalytic N6-AMP-lysine intermediate. NAD(+) is bound by residues Arg153, Glu187, Lys303, and Lys327. Zn(2+) contacts are provided by Cys421, Cys424, Cys439, and Cys444. Positions 604-684 (DEKNYFFNKR…DFINLSNAKK (81 aa)) constitute a BRCT domain.

The protein belongs to the NAD-dependent DNA ligase family. LigA subfamily. It depends on Mg(2+) as a cofactor. Requires Mn(2+) as cofactor.

The catalysed reaction is NAD(+) + (deoxyribonucleotide)n-3'-hydroxyl + 5'-phospho-(deoxyribonucleotide)m = (deoxyribonucleotide)n+m + AMP + beta-nicotinamide D-nucleotide.. Functionally, DNA ligase that catalyzes the formation of phosphodiester linkages between 5'-phosphoryl and 3'-hydroxyl groups in double-stranded DNA using NAD as a coenzyme and as the energy source for the reaction. It is essential for DNA replication and repair of damaged DNA. In Oenococcus oeni (strain ATCC BAA-331 / PSU-1), this protein is DNA ligase.